A 223-amino-acid polypeptide reads, in one-letter code: Zinc-finger homeodomain protein 12 (223 aa).

A compositionally biased stretch (polar residues) spans 1-20 (MSSLSKPNRQFLSPTTNNQD). The interval 1 to 24 (MSSLSKPNRQFLSPTTNNQDTGRE) is disordered. The ZF-HD dimerization-type; degenerate zinc-finger motif lies at 37-88 (YNECLKNHAVSLGGHALDGCGEFTPKSTTILTDPPSLRCDACGCHRNFHRRS). Residues 147 to 204 (KKHKRTKFTAEQKVKMRGFAERAGWKINGWDEKWVREFCSEVGIERKVLKVWIHNNKY) constitute a DNA-binding region (homeobox; atypical).

Homo- and heterodimer with other ZFHD proteins. Interacts with ZHD11.

The protein localises to the nucleus. Its function is as follows. Putative transcription factor. This Arabidopsis thaliana (Mouse-ear cress) protein is Zinc-finger homeodomain protein 12 (ZHD12).